A 96-amino-acid polypeptide reads, in one-letter code: Alpha-elapitoxin-Al2b (96 aa).

An N-terminal signal peptide occupies residues 1-21 (MKTLLLTLVVVTIVCLDFGGG). 5 disulfides stabilise this stretch: Cys24–Cys41, Cys34–Cys62, Cys47–Cys51, Cys66–Cys77, and Cys78–Cys83.

Belongs to the three-finger toxin family. Long-chain subfamily. Type II alpha-neurotoxin sub-subfamily. As to expression, expressed by the venom gland.

The protein localises to the secreted. Potent long-chain postsynaptic neurotoxin. Pseudo-irreversibly inhibits the nicotinic acetylcholine receptor through competitive antagonism. In Austrelaps labialis (Pygmy copperhead), this protein is Alpha-elapitoxin-Al2b.